The primary structure comprises 329 residues: Biotin synthase (329 aa).

A Radical SAM core domain is found at 48–278 (FLGNGVDLCS…TKKIAVCGGR (231 aa)). [4Fe-4S] cluster is bound by residues cysteine 66, cysteine 70, and cysteine 73. 2 residues coordinate [2Fe-2S] cluster: serine 143 and cysteine 203.

Belongs to the radical SAM superfamily. Biotin synthase family. As to quaternary structure, homodimer. [4Fe-4S] cluster is required as a cofactor. It depends on [2Fe-2S] cluster as a cofactor.

It catalyses the reaction (4R,5S)-dethiobiotin + (sulfur carrier)-SH + 2 reduced [2Fe-2S]-[ferredoxin] + 2 S-adenosyl-L-methionine = (sulfur carrier)-H + biotin + 2 5'-deoxyadenosine + 2 L-methionine + 2 oxidized [2Fe-2S]-[ferredoxin]. The protein operates within cofactor biosynthesis; biotin biosynthesis; biotin from 7,8-diaminononanoate: step 2/2. In terms of biological role, catalyzes the conversion of dethiobiotin (DTB) to biotin by the insertion of a sulfur atom into dethiobiotin via a radical-based mechanism. The polypeptide is Biotin synthase (Geobacter metallireducens (strain ATCC 53774 / DSM 7210 / GS-15)).